The chain runs to 137 residues: uncharacterized protein (137 aa).

The disordered stretch occupies residues 67–87; that stretch reads KSERQHQRVHHELPHDKPRQS. A compositionally biased stretch (basic and acidic residues) spans 70–85; sequence RQHQRVHHELPHDKPR.

This is an uncharacterized protein from Human cytomegalovirus (strain AD169) (HHV-5).